A 267-amino-acid polypeptide reads, in one-letter code: MIVRRQNRRFTIMAAGPRGSGKSSFFNSLIGKEIVTSRGHEGIDLYMLNLDCEGIMQRITLIDTPGFGEGFDDSEIQETICNFIKAQLDMFIAEESKIRRNPKYEDTRVHCLLYFIPSTSSSLKSRDIAFLRKVSGLVNIIPVISKSDGLSITERIEVKRQVMEQIKHYNISIFDLDDPEVYSSPAAGNDLNSLVPFLVVSADRENFESRARNYQWGDVSIDNPDHCDLPALRELLLSTHIYGLIDYTASEIYENYRAAVLEGGVRK.

Positions 6-263 (QNRRFTIMAA…ENYRAAVLEG (258 aa)) constitute a Septin-type G domain. Positions 16 to 23 (GPRGSGKS) are G1 motif. Residues 16 to 23 (GPRGSGKS), G66, 146 to 154 (KSDGLSITE), and R212 each bind GTP. The tract at residues 63 to 66 (DTPG) is G3 motif. Residues 145 to 148 (SKSD) form a G4 motif region.

It belongs to the TRAFAC class TrmE-Era-EngA-EngB-Septin-like GTPase superfamily. Septin GTPase family. As to quaternary structure, component of the septin complex.

In terms of biological role, septins are GTPases involved in cytokinesis. The septins localize to the site of cleavage and act as a structural scaffold that recruits different components involved in diverse processes at specific stages during the cell cycle. Septins are also involved in cell morphogenesis, chitin deposition, cell cycle regulation, cell compartmentalization and spore wall formation. The sequence is that of Cell division control protein 11 (CDC11) from Encephalitozoon cuniculi (strain GB-M1) (Microsporidian parasite).